The following is a 197-amino-acid chain: CRISPR system CMR subunit Cmr7 1 (197 aa).

It belongs to the CRISPR system Cmr7 family. Possible homodimer. Part of the CMR ribonucleoprotein complex, consisting of crRNA plus Cmr1/Cmr2/Cmr3/Cmr4/Cmr5/Cmr6 at 1:1 and possibly 3 Cmr7 dimers. A Cmr2/Cmr3/Cmr7 subcomplex without crRNA can also be isolated. It does not cleave target RNA.

It localises to the cytoplasm. Its function is as follows. CRISPR (clustered regularly interspaced short palindromic repeat) is an adaptive immune system that provides protection against mobile genetic elements (viruses, transposable elements and conjugative plasmids). CRISPR clusters contain spacers, sequences complementary to antecedent mobile elements, and target invading nucleic acids. CRISPR clusters are transcribed and processed into CRISPR RNA (crRNA). The CMR complex degrades RNA complementary to the crRNA (target RNA) within UA dinucleotides, generating 3'-OH and 5'-phosphate ends. Activity is dependent on the 8 nt long 5' tag in the crRNA, an unpaired 3' flag on the target RNA, and is stimulated by ATP. Some cleavage of the guide crRNA can also be observed. The chain is CRISPR system CMR subunit Cmr7 1 (cmr7A) from Saccharolobus solfataricus (strain ATCC 35092 / DSM 1617 / JCM 11322 / P2) (Sulfolobus solfataricus).